The sequence spans 333 residues: Fructose-1,6-bisphosphatase class 1 (333 aa).

Residues glutamate 92, aspartate 113, leucine 115, and aspartate 116 each coordinate Mg(2+). Substrate-binding positions include 116 to 119 (DGSS), asparagine 209, tyrosine 242, and lysine 272. Mg(2+) is bound at residue glutamate 278.

It belongs to the FBPase class 1 family. As to quaternary structure, homotetramer. It depends on Mg(2+) as a cofactor.

Its subcellular location is the cytoplasm. The enzyme catalyses beta-D-fructose 1,6-bisphosphate + H2O = beta-D-fructose 6-phosphate + phosphate. The protein operates within carbohydrate biosynthesis; Calvin cycle. This Chlorobium phaeovibrioides (strain DSM 265 / 1930) (Prosthecochloris vibrioformis (strain DSM 265)) protein is Fructose-1,6-bisphosphatase class 1.